The primary structure comprises 260 residues: 3'-5' ssDNA/RNA exonuclease TatD (260 aa).

A divalent metal cation is bound by residues glutamate 91, histidine 127, and histidine 152.

This sequence belongs to the metallo-dependent hydrolases superfamily. TatD-type hydrolase family. TatD subfamily. Monomer. It depends on Mg(2+) as a cofactor.

The protein resides in the cytoplasm. 3'-5' exonuclease that prefers single-stranded DNA and RNA. May play a role in the H(2)O(2)-induced DNA damage repair. The chain is 3'-5' ssDNA/RNA exonuclease TatD from Enterobacter sp. (strain 638).